The sequence spans 300 residues: Ubiquitin carboxyl-terminal hydrolase 2 (300 aa).

Residues 2-220 (SWTTIESDAG…IRFNLMVICK (219 aa)) form the UCH catalytic domain. Cysteine 83 acts as the Nucleophile in catalysis. Histidine 159 functions as the Proton donor in the catalytic mechanism. In terms of domain architecture, ULD spans 261–290 (NFVGLFVELSKLLVKDRIDKNTWNSTLETA).

This sequence belongs to the peptidase C12 family. Component of the 26S proteasome. Interacts with rpn10.

The protein localises to the nucleus. It catalyses the reaction Thiol-dependent hydrolysis of ester, thioester, amide, peptide and isopeptide bonds formed by the C-terminal Gly of ubiquitin (a 76-residue protein attached to proteins as an intracellular targeting signal).. Its function is as follows. Ubiquitin-protein hydrolase is involved both in the processing of ubiquitin precursors and of ubiquitinated proteins. This enzyme is a thiol protease that recognizes and hydrolyzes a peptide bond at the C-terminal glycine of ubiquitin. The polypeptide is Ubiquitin carboxyl-terminal hydrolase 2 (uch2) (Schizosaccharomyces pombe (strain 972 / ATCC 24843) (Fission yeast)).